Here is a 537-residue protein sequence, read N- to C-terminus: Ribonuclease III domain-containing protein RNC1, chloroplastic (537 aa).

The N-terminal 51 residues, 1-51 (MELCSSSPSSSLLRICSSSAPEISFSSSISQFPSKTQSILTKSRFQNLRIC), are a transit peptide targeting the chloroplast. RNase III domains follow at residues 141–283 (LLEV…LCFG) and 415–515 (EHPR…TIYG).

In terms of assembly, interacts with RNA. Part of large ribonucleo-protein particles that contain CAF1 and/or CAF2.

Its subcellular location is the plastid. The protein resides in the chloroplast. Functionally, binds specific group II introns in chloroplasts and facilitates their splicing. Acts on both subgroup IIA and subgroup IIB introns. The substrates of the subgroup II also require the CRM domain proteins CAF1 or CAF2. Binds both single-stranded and double-stranded RNA non-specifically, but lacks endonuclease activity. Required for plastid ribosome biogenesis. The sequence is that of Ribonuclease III domain-containing protein RNC1, chloroplastic from Arabidopsis thaliana (Mouse-ear cress).